A 228-amino-acid polypeptide reads, in one-letter code: MTGNQMFCRENELDESFKQLASYINIPVGVLLPFKSQCFVRHYNKGQIVYYSSDETTHIYLLLKGNIMRENFNLNGDVYRYLNREKVLFPLNNLFQDKVPNEMCTALTDCEMIGIPRDLIEYLCKNHEEIFVKLFSLLSETQCQHIEYNMALTSKLAKERVTKILRYLCQTVGYDHDEFYEIKHFMTIQLLSDMAGISRETTSHIINELREEKILFKNSKNWLVSKDL.

22-141 (SYINIPVGVL…VKLFSLLSET (120 aa)) contacts a nucleoside 3',5'-cyclic phosphate. The HTH crp-type domain occupies 155 to 228 (KLAKERVTKI…SKNWLVSKDL (74 aa)). Positions 188 to 207 (IQLLSDMAGISRETTSHIIN) form a DNA-binding region, H-T-H motif.

The protein resides in the cytoplasm. Functionally, positively regulates the expression of the arcABDCR operon under anaerobic conditions, thus playing an essential role in arginine catabolism. May also control the expression of genes encoding proteins which are involved in anaerobic metabolism. Can bind cyclic AMP. This chain is HTH-type transcriptional regulator ArcR (arcR), found in Staphylococcus epidermidis (strain ATCC 12228 / FDA PCI 1200).